We begin with the raw amino-acid sequence, 154 residues long: OCIA domain-containing protein 2 (154 aa).

Residues 1–22 (MASASARGNQDKDAHFPPPSKQ) are disordered. The OCIA domain maps to 1–120 (MASASARGNQ…HFFEDQLRGA (120 aa)). Lysine 41 carries the N6-acetyllysine modification.

As to quaternary structure, interacts (via OCIA domain) with OCIAD1/ASRIJ and STAT3.

The protein localises to the endosome. It is found in the mitochondrion. The protein resides in the mitochondrion inner membrane. Has an essential role in the assembly of mitochondrial respiratory chain complex III. Is also required for STAT3 activation and plays a role in cell migration. This Homo sapiens (Human) protein is OCIA domain-containing protein 2 (OCIAD2).